The following is a 351-amino-acid chain: 3-ketosteroid-9-alpha-monooxygenase, ferredoxin reductase component (351 aa).

The 107-residue stretch at 10 to 116 (SRSVILTVSA…LPPAGVFTPK (107 aa)) folds into the FAD-binding FR-type domain. Residues 264-351 (ATVEVELDGE…PVTDHLKIEF (88 aa)) form the 2Fe-2S ferredoxin-type domain. [2Fe-2S] cluster is bound by residues Cys300, Cys305, Cys308, and Cys338.

The two-component system 3-ketosteroid-9-alpha-monooxygenase is composed of an oxygenase component KshA and a reductase component KshB. FAD is required as a cofactor. [2Fe-2S] cluster serves as cofactor.

It carries out the reaction androsta-1,4-diene-3,17-dione + 2 reduced [2Fe-2S]-[ferredoxin] + O2 + 2 H(+) = 9alpha-hydroxyandrosta-1,4-diene-3,17-dione + 2 oxidized [2Fe-2S]-[ferredoxin] + H2O. Its pathway is steroid metabolism; cholesterol degradation. KSH activity is completely inhibited by zinc ions. KshB is specifically inhibited by Cu(2+) ions. Functionally, probably involved in the degradation of cholesterol. In vitro, catalyzes the introduction of a 9alpha-hydroxyl moiety into the ring B of 3-ketosteroid substrates such as 1,4-androstadiene-3,17-dione (ADD), 4-androstene-3,17-dione (AD), 4-androstene-17beta-ol-3-one (testosterone), 4-pregnene-3,20-dione (progesterone), 19-nor-4-androstene-3,17-dione (nordion), 1-(5alpha)-androstene-3,17-dione, 5alpha-androstane-3,17-dione and 5beta-androstane-3,17-dione. KSH has the highest activity with 3-keto-Delta4 steroid substrates. In Rhodococcus rhodochrous, this protein is 3-ketosteroid-9-alpha-monooxygenase, ferredoxin reductase component.